The sequence spans 564 residues: Dihydroxy-acid dehydratase (564 aa).

Cysteine 53 contacts [2Fe-2S] cluster. Aspartate 85 provides a ligand contact to Mg(2+). Cysteine 126 serves as a coordination point for [2Fe-2S] cluster. 2 residues coordinate Mg(2+): aspartate 127 and lysine 128. The residue at position 128 (lysine 128) is an N6-carboxylysine. Cysteine 203 serves as a coordination point for [2Fe-2S] cluster. Glutamate 454 provides a ligand contact to Mg(2+). Catalysis depends on serine 480, which acts as the Proton acceptor.

The protein belongs to the IlvD/Edd family. Homodimer. Requires [2Fe-2S] cluster as cofactor. Mg(2+) serves as cofactor.

It carries out the reaction (2R)-2,3-dihydroxy-3-methylbutanoate = 3-methyl-2-oxobutanoate + H2O. It catalyses the reaction (2R,3R)-2,3-dihydroxy-3-methylpentanoate = (S)-3-methyl-2-oxopentanoate + H2O. Its pathway is amino-acid biosynthesis; L-isoleucine biosynthesis; L-isoleucine from 2-oxobutanoate: step 3/4. The protein operates within amino-acid biosynthesis; L-valine biosynthesis; L-valine from pyruvate: step 3/4. Its function is as follows. Functions in the biosynthesis of branched-chain amino acids. Catalyzes the dehydration of (2R,3R)-2,3-dihydroxy-3-methylpentanoate (2,3-dihydroxy-3-methylvalerate) into 2-oxo-3-methylpentanoate (2-oxo-3-methylvalerate) and of (2R)-2,3-dihydroxy-3-methylbutanoate (2,3-dihydroxyisovalerate) into 2-oxo-3-methylbutanoate (2-oxoisovalerate), the penultimate precursor to L-isoleucine and L-valine, respectively. In Mycobacterium leprae (strain TN), this protein is Dihydroxy-acid dehydratase.